Reading from the N-terminus, the 264-residue chain is 3-methyl-2-oxobutanoate hydroxymethyltransferase (264 aa).

Mg(2+) is bound by residues Asp45 and Asp84. 3-methyl-2-oxobutanoate-binding positions include 45-46, Asp84, and Lys112; that span reads DS. Glu114 lines the Mg(2+) pocket. The Proton acceptor role is filled by Glu181.

This sequence belongs to the PanB family. As to quaternary structure, homodecamer; pentamer of dimers. Mg(2+) is required as a cofactor.

Its subcellular location is the cytoplasm. It catalyses the reaction 3-methyl-2-oxobutanoate + (6R)-5,10-methylene-5,6,7,8-tetrahydrofolate + H2O = 2-dehydropantoate + (6S)-5,6,7,8-tetrahydrofolate. It functions in the pathway cofactor biosynthesis; (R)-pantothenate biosynthesis; (R)-pantoate from 3-methyl-2-oxobutanoate: step 1/2. Its function is as follows. Catalyzes the reversible reaction in which hydroxymethyl group from 5,10-methylenetetrahydrofolate is transferred onto alpha-ketoisovalerate to form ketopantoate. The sequence is that of 3-methyl-2-oxobutanoate hydroxymethyltransferase from Shewanella pealeana (strain ATCC 700345 / ANG-SQ1).